Here is a 96-residue protein sequence, read N- to C-terminus: Exopolysaccharide production repressor protein (96 aa).

2 helical membrane passes run 6–26 and 35–55; these read FVVS…FLTG and TLLC…FLVW. Residues 64 to 96 form a disordered region; the sequence is LSPGQLPADPTNDEKQTGKLSLRRLNRPPHFNS.

It localises to the cell membrane. It functions in the pathway glycan metabolism; exopolysaccharide biosynthesis. Inhibition of exopolysaccharide synthesis (EPS) and nodulation ability (NOD). This is Exopolysaccharide production repressor protein (exoX) from Sinorhizobium fredii (strain NBRC 101917 / NGR234).